The sequence spans 74 residues: Exodeoxyribonuclease 7 small subunit (74 aa).

Belongs to the XseB family. Heterooligomer composed of large and small subunits.

The protein resides in the cytoplasm. It carries out the reaction Exonucleolytic cleavage in either 5'- to 3'- or 3'- to 5'-direction to yield nucleoside 5'-phosphates.. Bidirectionally degrades single-stranded DNA into large acid-insoluble oligonucleotides, which are then degraded further into small acid-soluble oligonucleotides. The protein is Exodeoxyribonuclease 7 small subunit of Synechococcus elongatus (strain ATCC 33912 / PCC 7942 / FACHB-805) (Anacystis nidulans R2).